A 128-amino-acid polypeptide reads, in one-letter code: uncharacterized protein (128 aa).

The next 3 membrane-spanning stretches (helical) occupy residues 1–21 (MLVF…LIFL), 51–71 (VRVE…AILG), and 76–96 (ANFL…VYYV).

The protein resides in the membrane. This is an uncharacterized protein from Saccharomyces cerevisiae (strain ATCC 204508 / S288c) (Baker's yeast).